The sequence spans 168 residues: Nascent polypeptide-associated complex subunit alpha (168 aa).

Residues Ser-14–Leu-78 form the NAC-A/B domain. Residues Gln-83–Leu-129 form a disordered region. The span at Ala-100–Ala-115 shows a compositional bias: low complexity. Residues Leu-129–Lys-168 form the UBA domain.

This sequence belongs to the NAC-alpha family. Part of the nascent polypeptide-associated complex (NAC), consisting of EGD2 and EGD1. NAC associates with ribosomes via EGD1.

The protein localises to the cytoplasm. It localises to the nucleus. Its function is as follows. Component of the nascent polypeptide-associated complex (NAC), a dynamic component of the ribosomal exit tunnel, protecting the emerging polypeptides from interaction with other cytoplasmic proteins to ensure appropriate nascent protein targeting. The NAC complex also promotes mitochondrial protein import by enhancing productive ribosome interactions with the outer mitochondrial membrane and blocks the inappropriate interaction of ribosomes translating non-secretory nascent polypeptides with translocation sites in the membrane of the endoplasmic reticulum. EGD2 may also be involved in transcription regulation. The sequence is that of Nascent polypeptide-associated complex subunit alpha (EGD2) from Eremothecium gossypii (strain ATCC 10895 / CBS 109.51 / FGSC 9923 / NRRL Y-1056) (Yeast).